The following is a 101-amino-acid chain: MTTFTDKELIKEIKERISSLDVRDDIERRAYEIALLSLEVEPDEREAYELFMEKRFGDLVDRRRAKNGDNEYMAWDMTLGWIVWQQRAGIHFSTMSQQEVK.

This is an uncharacterized protein from Shigella flexneri.